The sequence spans 189 residues: Ras-like protein rasC (189 aa).

11 to 18 (GDGGVGKS) is a GTP binding site. Positions 33 to 41 (YDPTIENSY) match the Effector region motif. GTP-binding positions include 58–62 (DTAGQ) and 117–120 (NKAD). Cysteine 186 is modified (cysteine methyl ester). The S-geranylgeranyl cysteine moiety is linked to residue cysteine 186. A propeptide spans 187–189 (IIL) (removed in mature form).

It belongs to the small GTPase superfamily. Ras family.

Its subcellular location is the cell membrane. It catalyses the reaction GTP + H2O = GDP + phosphate + H(+). Its activity is regulated as follows. Alternates between an inactive form bound to GDP and an active form bound to GTP. Activated by a guanine nucleotide-exchange factor (GEF) and inactivated by a GTPase-activating protein (GAP). Functionally, ras proteins bind GDP/GTP and possess intrinsic GTPase activity. This is Ras-like protein rasC (rasC) from Dictyostelium discoideum (Social amoeba).